Consider the following 330-residue polypeptide: Probable WRKY transcription factor 39 (330 aa).

A DNA-binding region (WRKY) is located at residues 256–322; that stretch reads KIADIPPDEY…YEGEHNHSRI (67 aa).

It localises to the nucleus. Transcription factor. Interacts specifically with the W box (5'-(T)TGAC[CT]-3'), a frequently occurring elicitor-responsive cis-acting element. The polypeptide is Probable WRKY transcription factor 39 (WRKY39) (Arabidopsis thaliana (Mouse-ear cress)).